A 153-amino-acid chain; its full sequence is UPF0756 membrane protein Lm4b_01579 (153 aa).

The next 4 helical transmembrane spans lie at Met6 to Ile26, Trp54 to Phe74, Ser80 to Ala100, and Leu117 to Ile137.

Belongs to the UPF0756 family.

The protein resides in the cell membrane. In Listeria monocytogenes serotype 4b (strain CLIP80459), this protein is UPF0756 membrane protein Lm4b_01579.